Here is a 142-residue protein sequence, read N- to C-terminus: Putative pre-16S rRNA nuclease (142 aa).

The protein belongs to the YqgF nuclease family.

It is found in the cytoplasm. Could be a nuclease involved in processing of the 5'-end of pre-16S rRNA. The polypeptide is Putative pre-16S rRNA nuclease (Mycoplasmoides gallisepticum (strain R(low / passage 15 / clone 2)) (Mycoplasma gallisepticum)).